The sequence spans 250 residues: 5-oxoprolinase subunit A (250 aa).

This sequence belongs to the LamB/PxpA family. Forms a complex composed of PxpA, PxpB and PxpC.

It carries out the reaction 5-oxo-L-proline + ATP + 2 H2O = L-glutamate + ADP + phosphate + H(+). Catalyzes the cleavage of 5-oxoproline to form L-glutamate coupled to the hydrolysis of ATP to ADP and inorganic phosphate. This is 5-oxoprolinase subunit A from Staphylococcus haemolyticus (strain JCSC1435).